A 758-amino-acid chain; its full sequence is MKKEKIDLFYGALLHDIGKVIQRATGERKKHALVGADWFDEIADNQVISDQIRYHMANYQSDKLGNDHLAYITYIADNIASGVDRRQSNEESDEDASAKIWDTYTNQADIFNVFGAQTDKRYFKPTVLNLKSKPNFASATYEPFSKGDYAAIATRIKNELAEFEFNQAQIDSLLNLFEAILSFVPSSTNSKEIADISLAEHSRLTAAFALAIYDYLEDKGRHNYKEDLFTKASAFYEEEAFLLASFDLSGIQDFIYNIATSGAAKQLKARSLYLDFMSEYIADSLLDKLGLNRANLLYVGGGHAYFVLANTEKTVETLVQFEKDFNQFLLANFQTRLYVAFGWGSFAAKDIMSELNSPESYRQIYQKASRMISEKKISRYDYRTLMLLNRGGKSSERECEICHSVENLVSYHDQKVCDICRGLYQFSKEIAHDHFIITENEGLPIGPNACLKGVAFEKLSQESFSRVYVKNDYKAGTIKATHVFVGDYQCDEIHKYAALSKNEDGLGIKRLAVVRLDVDDLGAAFMAGFSRQGNGQYSTLSRSATFSRSMSLFFKVYINQFASDKKLSIIYAGGDDVFAIGSWQDIIAFTVELRQNFIKWTNGKLTLSAGIGLFADKTPISLMAHQTGELEEAAKGNEKDSISLFSSDYTFKFDRFITNVYDDKLEQIRYFFNHQDERGKNFIYKLIELLRNYESEEKMNVARLAYYLTRLEELTDKDERDKFKQFKKLFFKWYTNNESDRKEAELALLLYVYEIRKD.

Positions 1-82 are HD domain; the sequence is MKKEKIDLFY…TYIADNIASG (82 aa). A GGDEF domain is found at 509 to 647; the sequence is KRLAVVRLDV…EKDSISLFSS (139 aa).

It belongs to the CRISPR-associated Cas10/Csm1 family. Part of the Csm effector complex that includes at least Cas10(1), Csm2(3), Csm3(5), Csm4(1), Csm5(1) and mature crRNA. The Csm complex is elongated and slightly twisted with a maximal length of 215 Angstroms and a diameter of 75-80 Angstroms. It has been modeled to have a central protein filamant of Csm3 subunits along which the dsRNA helix of paired crRNA and target RNA binds. The filament is capped at one end by Cas10 and Csm4 and at the other end by Csm5; ssDNA is thought to bind to the N-terminal HD domain of Cas10. Csm with a precursor crRNA does not include Csm5, while Cas6, the enzyme probably involved in pre-crRNA processing, is found associated with a subset of the Csm complex. The cofactor is a divalent metal cation.

The catalysed reaction is 6 ATP = cyclic hexaadenylate + 6 diphosphate. SsDNase activity is activated by target RNA binding to the Csm-crRNA complex and is inhibited by EDTA. CRISPR (clustered regularly interspaced short palindromic repeat) is an adaptive immune system that provides protection against mobile genetic elements (viruses, transposable elements and conjugative plasmids). CRISPR clusters contain spacers, sequences complementary to antecedent mobile elements, and target invading nucleic acids. CRISPR clusters are transcribed and processed into CRISPR RNA (crRNA). The type III-A Csm effector complex binds crRNA and acts as a crRNA-guided RNase, DNase and cyclic oligoadenylate synthase; binding of target RNA cognate to the crRNA is required for all activities. In a heterologous host this Csm effector complex restricts ssRNA phage MS2, suggesting it may target RNA viruses in vivo. Its function is as follows. Csm functions as a non-specific ssDNase. Base-pairing between crRNA and target RNA to form a ternary Csm complex activates a ssDNase activity; target RNA cleavage suppresses the ssDNase, a temporal control that prevents uncontrolled DNA degradation. Viral RNA transcripts probably tether the Csm complex to the viral genome, recruiting Cas10 ssDNA activity which is able to degrade DNA in the transcription bubble, spatially controlling the DNase activity. In terms of biological role, this subunit has a weak ssDNase activity that is dramatically activated by the ternary Csm effector complex (the crRNA, Cas proteins and a cognate target ssRNA). Target RNA and ssDNA are cleaved simultaneously, although RNase activity (of Csm3) is much faster. RNA cleavage by Csm3 is not required for ssDNase activity as Csm complex with inactive Csm3 still has ssDNase activity; however as the cleaved target RNA products dissociate away ssDNase activity decreases. Self-recognition, with subsequent repression of the ssDNase activity, occurs when the 5' handle of the crRNA bases pairs with the 3' flanking sequence of the target RNA (which would occur if the CRISPR locus were transcribed as an anti-pre-crRNA). This protein has low activity on dsDNA which is not stimulated by the Csm complex. Functionally, this subunit is a single-strand-specific deoxyribonuclease (ssDNase) which digests both linear and circular ssDNA; it has both exo- and endonuclease activity. When associated with the ternary Csm effector complex (the crRNA, Cas proteins and a cognate target ssRNA) synthesizes cyclic oligoadenylates (cOA) from ATP, producing cyclic triadenylate (cA3) up to cyclic hexaadenylate (cA6), which is the active cOA. The enzyme is also able to cyclize pppA3 up to pppA6. cOAs are second messengers that induce an antiviral state important for defense against invading nucleic acids. Synthesis of cOA can occur with AMP plus ATP, 2'dATP or 3'dATP (but no other nucleotides), and requires a free 3'-OH ribose moiety. The protein is CRISPR system single-strand-specific deoxyribonuclease Cas10/Csm1 (subtype III-A) of Streptococcus thermophilus.